We begin with the raw amino-acid sequence, 190 residues long: Xanthine phosphoribosyltransferase (190 aa).

L20 and N27 together coordinate xanthine. Position 127 to 131 (127 to 131 (AYGNA)) interacts with 5-phospho-alpha-D-ribose 1-diphosphate. Residue K155 participates in xanthine binding.

The protein belongs to the purine/pyrimidine phosphoribosyltransferase family. Xpt subfamily. In terms of assembly, homodimer.

It localises to the cytoplasm. It catalyses the reaction XMP + diphosphate = xanthine + 5-phospho-alpha-D-ribose 1-diphosphate. It participates in purine metabolism; XMP biosynthesis via salvage pathway; XMP from xanthine: step 1/1. Its function is as follows. Converts the preformed base xanthine, a product of nucleic acid breakdown, to xanthosine 5'-monophosphate (XMP), so it can be reused for RNA or DNA synthesis. The polypeptide is Xanthine phosphoribosyltransferase (Bacteroides thetaiotaomicron (strain ATCC 29148 / DSM 2079 / JCM 5827 / CCUG 10774 / NCTC 10582 / VPI-5482 / E50)).